The primary structure comprises 192 residues: MAVFLLLLALGLLLAKPSESRMKGTTEQFSQEEMQPAAKQTLEESANSTLSDKNTGLSISKHVMSATPLTPRRLSFIIPKGNTMRDGRNCVNSLRVWRTEVDGNASCQLGNDFIHGSMDVSLRIPKATRGKCEQTPKPSSSGSLGLERTTCKVLAGHQCLRSHEHSITSLKKILTVLASNSLMSWLVSGCKL.

An N-terminal signal peptide occupies residues 1–15 (MAVFLLLLALGLLLA). The disordered stretch occupies residues 21–54 (RMKGTTEQFSQEEMQPAAKQTLEESANSTLSDKN). The span at 43–54 (EESANSTLSDKN) shows a compositional bias: polar residues. N-linked (GlcNAc...) asparagine glycans are attached at residues N47 and N104.

It belongs to the pancreatic ribonuclease family.

It is found in the secreted. The polypeptide is Putative inactive ribonuclease 11 (Rnase11) (Mus musculus (Mouse)).